Consider the following 249-residue polypeptide: Type I iodothyronine deiodinase (249 aa).

Topologically, residues 1–12 (MELPLPGLWLKR) are extracellular. Residues 13–33 (LWVLFQVALHVAMGKVLMTLF) traverse the membrane as a helical; Signal-anchor for type III membrane protein segment. At 34–249 (PGRVKQDILA…VRAVLEKLHS (216 aa)) the chain is on the cytoplasmic side. Selenocysteine 126 is a catalytic residue. Position 126 (selenocysteine 126) is a non-standard amino acid, selenocysteine.

It belongs to the iodothyronine deiodinase family. Predominantly monomer. Can form homodimers but homodimerization is not essential for enzyme activity.

Its subcellular location is the cell membrane. It is found in the endoplasmic reticulum membrane. The protein resides in the basolateral cell membrane. The enzyme catalyses 3,3',5-triiodo-L-thyronine + iodide + A + H(+) = L-thyroxine + AH2. The catalysed reaction is 3,3',5'-triiodo-L-thyronine + iodide + A + H(+) = L-thyroxine + AH2. It carries out the reaction 3,3'-diiodo-L-thyronine + iodide + A + H(+) = 3,3',5'-triiodo-L-thyronine + AH2. It catalyses the reaction 3,3'-diiodo-L-thyronine + iodide + A + H(+) = 3,3',5-triiodo-L-thyronine + AH2. The enzyme catalyses 3'-iodo-L-thyronine + iodide + A + H(+) = 3',5'-diiodo-L-thyronine + AH2. The catalysed reaction is 3-iodo-L-thyronine + iodide + A + H(+) = 3,5-diiodo-L-thyronine + AH2. It carries out the reaction 3-iodo-L-thyronine + iodide + A + H(+) = 3,3'-diiodo-L-thyronine + AH2. It catalyses the reaction 3,3'-diiodothyronamine + iodide + A + H(+) = 3,3',5'-triiodothyronamine + AH2. The enzyme catalyses 3'-iodothyronamine + iodide + A + H(+) = 3',5'-diiodothyronamine + AH2. The catalysed reaction is 3-iodothyronamine + iodide + A + H(+) = 3,3'-diiodothyronamine + AH2. It carries out the reaction 3,3'-diiodothyronamine + iodide + A + H(+) = 3,3',5-triiodothyronamine + AH2. It catalyses the reaction 3-iodothyronamine + iodide + A + H(+) = 3,5-diiodothyronamine + AH2. The enzyme catalyses 3,3'-diiodo-L-thyronine sulfate + iodide + A + H(+) = 3,3',5'-triiodo-L-thyronine sulfate + AH2. The catalysed reaction is 3,3',5'-triiodo-L-thyronine sulfate + iodide + A + H(+) = L-thyroxine sulfate + AH2. It carries out the reaction 3,3'-diiodo-L-thyronine sulfate + iodide + A + H(+) = 3,3',5-triiodo-L-thyronine sulfate + AH2. Its function is as follows. Plays a crucial role in the metabolism of thyroid hormones (TH) and has specific roles in TH activation and inactivation by deiodination. Catalyzes the deiodination of L-thyroxine (T4) to 3,5,3'-triiodothyronine (T3) and 3,3',5'-triiodothyronine (rT3) to 3,3'-diiodothyronine (3,3'-T2) via outer-ring deiodination (ORD). Catalyzes the deiodination of T4 to rT3, T3 to 3,3'-T2, 3,5-diiodothyronine (3,5-T2) to 3-monoiodothyronine (3-T1) and 3,3'-T2 to 3-T1 via inner-ring deiodination (IRD). Catalyzes the deiodination of 3',5'-diiodothyronine (3',5'-T2) to 3'-monoiodothyronine (3'-T1) via ORD. Catalyzes the phenolic ring deiodinations of 3,3',5'-triiodothyronamine, 3',5'-diiodothyronamine and 3,3'-diiodothyronamine as well as tyrosyl ring deiodinations of 3,5,3'-triiodothyronamine and 3,5-diiodothyronamine. Catalyzes the deiodination of L-thyroxine sulfate and 3,3',5-triiodo-L-thyronine sulfate via IRD and of 3,3',5'-triiodo-L-thyronine sulfate via ORD. The chain is Type I iodothyronine deiodinase (DIO1) from Sus scrofa (Pig).